The sequence spans 348 residues: GMP reductase (348 aa).

NADP(+) is bound at residue 108–131 (ADFQKTKDIMALSDELIFICVDIA). Residues Gly181 and Gly183 each coordinate K(+). Residue Cys186 is the Thioimidate intermediate of the active site. 216 to 239 (IIGDGGCSCAGDVSKAFGGGADFV) lines the NADP(+) pocket.

This sequence belongs to the IMPDH/GMPR family. GuaC type 1 subfamily. As to quaternary structure, homotetramer.

It carries out the reaction IMP + NH4(+) + NADP(+) = GMP + NADPH + 2 H(+). In terms of biological role, catalyzes the irreversible NADPH-dependent deamination of GMP to IMP. It functions in the conversion of nucleobase, nucleoside and nucleotide derivatives of G to A nucleotides, and in maintaining the intracellular balance of A and G nucleotides. This is GMP reductase from Vibrio parahaemolyticus serotype O3:K6 (strain RIMD 2210633).